The sequence spans 281 residues: NAD kinase (281 aa).

Residue Asp-61 is the Proton acceptor of the active site. NAD(+) is bound by residues 61–62 (DG), 134–135 (ND), Arg-145, Asp-164, 175–180 (TAYSLS), and Gln-234.

It belongs to the NAD kinase family. A divalent metal cation serves as cofactor.

It is found in the cytoplasm. The catalysed reaction is NAD(+) + ATP = ADP + NADP(+) + H(+). Functionally, involved in the regulation of the intracellular balance of NAD and NADP, and is a key enzyme in the biosynthesis of NADP. Catalyzes specifically the phosphorylation on 2'-hydroxyl of the adenosine moiety of NAD to yield NADP. The chain is NAD kinase from Clostridium botulinum (strain Kyoto / Type A2).